The sequence spans 497 residues: Envelope glycoprotein E (497 aa).

The Virion surface portion of the chain corresponds to 1-398 (MCVFQILIIV…GTIIYDILLT (398 aa)). N-linked (GlcNAc...) asparagine; by host glycosylation is found at Asn60, Asn133, Asn148, Asn203, Asn277, Asn366, and Asn388. The chain crosses the membrane as a helical span at residues 399 to 419 (SLSIGAIIIVIVGGVCIAILI). Over 420–497 (RRRRRRRTRG…KIRKRLDLYH (78 aa)) the chain is Intravirion.

This sequence belongs to the alphaherpesvirinae glycoprotein E family. In terms of assembly, interacts with gI. Post-translationally, phosphorylated within the acidic cluster. Phosphorylation determines whether endocytosed viral gE traffics to the trans-Golgi network or recycles to the cell membrane.

It is found in the virion membrane. It localises to the host cell membrane. The protein localises to the host cell junction. Its subcellular location is the host Golgi apparatus membrane. The protein resides in the host endosome membrane. Functionally, in epithelial cells, the heterodimer gE/gI is required for the cell-to-cell spread of the virus, by sorting nascent virions to cell junctions. Once the virus reaches the cell junctions, virus particles can spread to adjacent cells extremely rapidly through interactions with cellular receptors that accumulate at these junctions. Implicated in basolateral spread in polarized cells. In neuronal cells, gE/gI is essential for the anterograde spread of the infection throughout the host nervous system. Together with US9, the heterodimer gE/gI is involved in the sorting and transport of viral structural components toward axon tips. The sequence is that of Envelope glycoprotein E (MDV096) from Gallus gallus (Chicken).